Here is a 319-residue protein sequence, read N- to C-terminus: HPr kinase/phosphorylase (319 aa).

Active-site residues include H146 and K167. ATP is bound at residue G161–S168. S168 serves as a coordination point for Mg(2+). The Proton acceptor; for phosphorylation activity. Proton donor; for dephosphorylation activity role is filled by D185. Residues L209–D218 are important for the catalytic mechanism of both phosphorylation and dephosphorylation. E210 serves as a coordination point for Mg(2+). Residue R252 is part of the active site. The segment at Q273–R278 is important for the catalytic mechanism of dephosphorylation.

This sequence belongs to the HPrK/P family. In terms of assembly, homohexamer. Mg(2+) is required as a cofactor.

It catalyses the reaction [HPr protein]-L-serine + ATP = [HPr protein]-O-phospho-L-serine + ADP + H(+). The enzyme catalyses [HPr protein]-O-phospho-L-serine + phosphate + H(+) = [HPr protein]-L-serine + diphosphate. Functionally, catalyzes the ATP- as well as the pyrophosphate-dependent phosphorylation of a specific serine residue in HPr, a phosphocarrier protein of the phosphoenolpyruvate-dependent sugar phosphotransferase system (PTS). HprK/P also catalyzes the pyrophosphate-producing, inorganic phosphate-dependent dephosphorylation (phosphorolysis) of seryl-phosphorylated HPr (P-Ser-HPr). This is HPr kinase/phosphorylase from Variovorax paradoxus (strain S110).